Reading from the N-terminus, the 389-residue chain is Tryptophan synthase beta chain (389 aa).

At Lys-84 the chain carries N6-(pyridoxal phosphate)lysine.

This sequence belongs to the TrpB family. As to quaternary structure, tetramer of two alpha and two beta chains. It depends on pyridoxal 5'-phosphate as a cofactor.

It catalyses the reaction (1S,2R)-1-C-(indol-3-yl)glycerol 3-phosphate + L-serine = D-glyceraldehyde 3-phosphate + L-tryptophan + H2O. Its pathway is amino-acid biosynthesis; L-tryptophan biosynthesis; L-tryptophan from chorismate: step 5/5. Its function is as follows. The beta subunit is responsible for the synthesis of L-tryptophan from indole and L-serine. This is Tryptophan synthase beta chain from Methanococcus aeolicus (strain ATCC BAA-1280 / DSM 17508 / OCM 812 / Nankai-3).